A 258-amino-acid polypeptide reads, in one-letter code: MMAALREACRSLWIAIGYFTRIPVPASVGFSQDGLNRAARFFPLVGWLVGAAGALAYWLASRTVPAPGVAVAASMAATLLLTGAFHEDGLADCADGFGGGYTAEDRLRIMRDSRIGAFGAIAVCMALLLKWQLLMAMAAQHAAAAMAAMVAAHAASRGMAVSYLLTHDYARMEGKAKPVAQPMGRRDAAWAALFGGLPLLGFGMACAAIAVAVLLAARWALGRYFTRRLGGITGDCLGLAQQVFELLVLWVLLAWTSS.

A run of 6 helical transmembrane segments spans residues 41-61 (FFPL…WLAS), 65-85 (PAPG…TGAF), 115-135 (IGAF…QLLM), 136-156 (AMAA…HAAS), 197-217 (LPLL…LLAA), and 236-256 (CLGL…LAWT).

It belongs to the CobS family. Requires Mg(2+) as cofactor.

It localises to the cell inner membrane. The enzyme catalyses alpha-ribazole + adenosylcob(III)inamide-GDP = adenosylcob(III)alamin + GMP + H(+). It catalyses the reaction alpha-ribazole 5'-phosphate + adenosylcob(III)inamide-GDP = adenosylcob(III)alamin 5'-phosphate + GMP + H(+). It participates in cofactor biosynthesis; adenosylcobalamin biosynthesis; adenosylcobalamin from cob(II)yrinate a,c-diamide: step 7/7. In terms of biological role, joins adenosylcobinamide-GDP and alpha-ribazole to generate adenosylcobalamin (Ado-cobalamin). Also synthesizes adenosylcobalamin 5'-phosphate from adenosylcobinamide-GDP and alpha-ribazole 5'-phosphate. The protein is Adenosylcobinamide-GDP ribazoletransferase of Ralstonia nicotianae (strain ATCC BAA-1114 / GMI1000) (Ralstonia solanacearum).